We begin with the raw amino-acid sequence, 218 residues long: Cytochrome c biogenesis ATP-binding export protein CcmA (218 aa).

One can recognise an ABC transporter domain in the interval leucine 2–valine 217. An ATP-binding site is contributed by glycine 34 to threonine 41.

The protein belongs to the ABC transporter superfamily. CcmA exporter (TC 3.A.1.107) family. The complex is composed of two ATP-binding proteins (CcmA) and two transmembrane proteins (CcmB).

The protein localises to the cell inner membrane. The catalysed reaction is heme b(in) + ATP + H2O = heme b(out) + ADP + phosphate + H(+). In terms of biological role, part of the ABC transporter complex CcmAB involved in the biogenesis of c-type cytochromes; once thought to export heme, this seems not to be the case, but its exact role is uncertain. Responsible for energy coupling to the transport system. The sequence is that of Cytochrome c biogenesis ATP-binding export protein CcmA from Yersinia pestis.